Consider the following 440-residue polypeptide: Ankyrin repeat and MYND domain-containing protein 2 (440 aa).

ANK repeat units follow at residues 45-74 (NGMTPLMHAAYKGKLEMCKLLLRHGADASC), 79-108 (HGYTALMFAALSGNKDITWVMLEAGAETDV), and 159-188 (KLAGPLHKIITTTNLHPVKIVMLVSENPLL). 8 residues coordinate Zn(2+): Cys320, Cys323, Cys332, Cys335, Cys341, Cys345, His353, and Cys357. Residues 320 to 357 (CTTCGEKGASKRCSVCKMVIYCDQTCQKTHWFAHKKMC) form an MYND-type zinc finger. Basic and acidic residues predominate over residues 371–381 (AAKHKRQEEKN). Residues 371-440 (AAKHKRQEEK…APTGPQLSEE (70 aa)) are disordered.

As to quaternary structure, interacts with the retinal-specific guanylyl cyclase GC1.

The protein localises to the cell projection. It is found in the cilium. Functionally, may be involved in the trafficking of signaling proteins to the cilia. The chain is Ankyrin repeat and MYND domain-containing protein 2 (Ankmy2) from Mus musculus (Mouse).